We begin with the raw amino-acid sequence, 614 residues long: Fructokinase-like 2, chloroplastic (614 aa).

A chloroplast-targeting transit peptide spans 1 to 44 (MASLSFTQFLSFPRCNADVPCLLQSHGFVKFRGERWNGKQSFSM). 2 disordered regions span residues 47–75 (GRRKLSESAPLEEEGNDGNGAVVGKKPSK) and 542–592 (GYPP…YVMK). A compositionally biased stretch (acidic residues) spans 548-563 (DMEEEEDDEEEDEVES). Positions 571–583 (ITEKEYRTSKPYD) are enriched in basic and acidic residues.

Belongs to the carbohydrate kinase PfkB family. As to quaternary structure, interacts with CITRX/TRXz. Binds to FLN1 and PTAC5. Associates with the plastid-encoded RNA polymerase (PEP) complex.

The protein localises to the plastid. It is found in the chloroplast. Its function is as follows. Required for proper chloroplast development, most likely through regulating plastid-encoded polymerase (PEP) dependent chloroplast transcription. Acts as a component of the transcriptionally active plastid chromosome that is required for plastid gene expression. This is Fructokinase-like 2, chloroplastic from Arabidopsis thaliana (Mouse-ear cress).